Here is a 150-residue protein sequence, read N- to C-terminus: Thyroid hormone-inducible hepatic protein (150 aa).

The disordered stretch occupies residues 83–104 (KVAGNETSEAENDAAETEEAEE). S90 bears the Phosphoserine mark. Over residues 90-104 (SEAENDAAETEEAEE) the composition is skewed to acidic residues.

This sequence belongs to the SPOT14 family. As to quaternary structure, homodimer. Heterodimer with MID1IP1. Interacts with THRB and PLAGL1. In terms of tissue distribution, mainly expressed in tissues that synthesize triglycerides.

The protein resides in the nucleus. It localises to the cytoplasm. In terms of biological role, plays a role in the regulation of lipogenesis, especially in lactating mammary gland. Important for the biosynthesis of triglycerides with medium-length fatty acid chains. May modulate lipogenesis by interacting with MID1IP1 and preventing its interaction with ACACA. May function as transcriptional coactivator. May modulate the transcription factor activity of THRB. The sequence is that of Thyroid hormone-inducible hepatic protein (Thrsp) from Mus musculus (Mouse).